The primary structure comprises 265 residues: uncharacterized protein (265 aa).

2 disordered regions span residues 162-183 and 196-239; these read VTKK…NNDQ and AKTN…DKEI. 2 stretches are compositionally biased toward polar residues: residues 165–183 and 213–233; these read KNAS…NNDQ and QSTS…GNAS.

This sequence belongs to the MG185/MG260 family.

This is an uncharacterized protein from Mycoplasma pneumoniae (strain ATCC 29342 / M129 / Subtype 1) (Mycoplasmoides pneumoniae).